The chain runs to 50 residues: Small ribosomal subunit protein eS31 (50 aa).

Cysteine 22, cysteine 25, cysteine 40, and cysteine 43 together coordinate Zn(2+). A C4-type zinc finger spans residues 22–43 (CPRCGPGVFMADHGDRWACGKC).

The protein belongs to the eukaryotic ribosomal protein eS31 family. Part of the 30S ribosomal subunit. The cofactor is Zn(2+).

The protein is Small ribosomal subunit protein eS31 of Pyrococcus furiosus (strain ATCC 43587 / DSM 3638 / JCM 8422 / Vc1).